Consider the following 341-residue polypeptide: MIQEAIYQVINKQDLDLDKTIQVMEEIMEGRATNAQIGSFLTAMRMKGETIDEITACATVMRQKCKRIHPEKDVLDIVGTGGDEANTFNISTVSSFVVSAGGVPVAKHGGRSVSSKCGSADLLEALGINIALSAEQSAEILQKIGMCFMFAPTYHASMKYAAPVRKELSVRTIFNILGPLANPAGANMQLLGVYDENLVEPLARVLLNLGVKRAMVVHGHDGLDEVTLCNTTTICEVSNGNINSFFLSPEQLGFSRCLLKELVGGDPKKNASIALDILNGSKGPKRDIVVLNSALCLYMSYNQITLRDCVKMAEQLIDSGAAKAQLNKFIELSNSFNQEVK.

Residues G79, 82–83, T87, 89–92, 107–115, and S119 contribute to the 5-phospho-alpha-D-ribose 1-diphosphate site; these read GD, NIST, and KHGGRSVSS. Anthranilate is bound at residue G79. S91 serves as a coordination point for Mg(2+). Residue R165 coordinates anthranilate. Mg(2+) contacts are provided by D224 and E225.

It belongs to the anthranilate phosphoribosyltransferase family. As to quaternary structure, homodimer. Mg(2+) serves as cofactor.

It carries out the reaction N-(5-phospho-beta-D-ribosyl)anthranilate + diphosphate = 5-phospho-alpha-D-ribose 1-diphosphate + anthranilate. It participates in amino-acid biosynthesis; L-tryptophan biosynthesis; L-tryptophan from chorismate: step 2/5. Its function is as follows. Catalyzes the transfer of the phosphoribosyl group of 5-phosphorylribose-1-pyrophosphate (PRPP) to anthranilate to yield N-(5'-phosphoribosyl)-anthranilate (PRA). The polypeptide is Anthranilate phosphoribosyltransferase (Ruminiclostridium cellulolyticum (strain ATCC 35319 / DSM 5812 / JCM 6584 / H10) (Clostridium cellulolyticum)).